Consider the following 273-residue polypeptide: Large ribosomal subunit protein uL2 (273 aa).

The tract at residues 221–263 (RGTAMNPVDHPHGGGEGRNFGKHPVTPWGVQTKGKKTRHNKRT) is disordered. Residues 253–263 (KGKKTRHNKRT) are compositionally biased toward basic residues.

Belongs to the universal ribosomal protein uL2 family. Part of the 50S ribosomal subunit. Forms a bridge to the 30S subunit in the 70S ribosome.

Its function is as follows. One of the primary rRNA binding proteins. Required for association of the 30S and 50S subunits to form the 70S ribosome, for tRNA binding and peptide bond formation. It has been suggested to have peptidyltransferase activity; this is somewhat controversial. Makes several contacts with the 16S rRNA in the 70S ribosome. The polypeptide is Large ribosomal subunit protein uL2 (Actinobacillus succinogenes (strain ATCC 55618 / DSM 22257 / CCUG 43843 / 130Z)).